The following is a 359-amino-acid chain: 3-dehydroquinate synthase (359 aa).

NAD(+) contacts are provided by residues 69-74, 103-107, 127-128, Lys-140, Lys-149, and 167-170; these read DGEKYK, GVVGD, TT, and TLDT. Residues Glu-182, His-245, and His-262 each coordinate Zn(2+).

The protein belongs to the sugar phosphate cyclases superfamily. Dehydroquinate synthase family. It depends on Co(2+) as a cofactor. Zn(2+) serves as cofactor. Requires NAD(+) as cofactor.

The protein localises to the cytoplasm. It catalyses the reaction 7-phospho-2-dehydro-3-deoxy-D-arabino-heptonate = 3-dehydroquinate + phosphate. The protein operates within metabolic intermediate biosynthesis; chorismate biosynthesis; chorismate from D-erythrose 4-phosphate and phosphoenolpyruvate: step 2/7. In terms of biological role, catalyzes the conversion of 3-deoxy-D-arabino-heptulosonate 7-phosphate (DAHP) to dehydroquinate (DHQ). In Ruthia magnifica subsp. Calyptogena magnifica, this protein is 3-dehydroquinate synthase.